A 420-amino-acid polypeptide reads, in one-letter code: Zinc finger and BTB domain-containing protein 42 (420 aa).

Positions 24-92 (CDCTVLVGDA…MYEGRLDLHN (69 aa)) constitute a BTB domain. Disordered stretches follow at residues 127–204 (TRTL…HPPC) and 222–247 (VKAE…PPPV). Residues 227–241 (DSFSEQDSSSPQSAD) show a composition bias toward low complexity. 4 consecutive C2H2-type zinc fingers follow at residues 292–314 (CICP…LSAH), 332–354 (PTCP…ERTH), 360–382 (YTCV…AVVH), and 388–411 (HACR…RKFH).

It belongs to the krueppel C2H2-type zinc-finger protein family. ZBTB18 subfamily. Highly expressed in skeletal muscle and ovary (at protein level). Low expression in brain, lung, spleen, liver and heart (at protein level). Not detected in kidney and intestines (at protein level). Also observed in testis and, at lower levels, in stomach and nervous system.

It is found in the cytoplasm. The protein localises to the nucleus. The protein resides in the nucleoplasm. In terms of biological role, transcriptional repressor. Specifically binds DNA and probably acts by recruiting chromatin remodeling multiprotein complexes. The polypeptide is Zinc finger and BTB domain-containing protein 42 (Zbtb42) (Mus musculus (Mouse)).